Reading from the N-terminus, the 269-residue chain is Shikimate dehydrogenase (NADP(+)) (269 aa).

Residues 17 to 19 (SKS) and Thr64 each bind shikimate. Catalysis depends on Lys68, which acts as the Proton acceptor. Asp80 contacts NADP(+). Asn89 and Asp105 together coordinate shikimate. NADP(+) contacts are provided by residues 130–134 (GAGGA), 154–159 (NRTHAK), and Met213. Residue Tyr215 coordinates shikimate. Residue Gly237 participates in NADP(+) binding.

Belongs to the shikimate dehydrogenase family. As to quaternary structure, homodimer.

It catalyses the reaction shikimate + NADP(+) = 3-dehydroshikimate + NADPH + H(+). It functions in the pathway metabolic intermediate biosynthesis; chorismate biosynthesis; chorismate from D-erythrose 4-phosphate and phosphoenolpyruvate: step 4/7. Its function is as follows. Involved in the biosynthesis of the chorismate, which leads to the biosynthesis of aromatic amino acids. Catalyzes the reversible NADPH linked reduction of 3-dehydroshikimate (DHSA) to yield shikimate (SA). The sequence is that of Shikimate dehydrogenase (NADP(+)) from Neisseria polysaccharea.